The following is a 513-amino-acid chain: E3 ubiquitin-protein ligase RNF25 (513 aa).

The RWD domain occupies 9-117 (SEIEVLQSIY…ERAKEILTDS (109 aa)). Zn(2+) is bound by residues Cys124, Cys127, Cys142, His144, His147, Cys150, Cys187, and Cys190. An RING-type; atypical zinc finger spans residues 124 to 191 (CVICLYDFKE…ELAVVCPVCR (68 aa)). The interval 261 to 513 (NLSDTPGMTD…EKEFRKEGVL (253 aa)) is disordered. A compositionally biased stretch (low complexity) spans 271–297 (SSGAESSQSLPSSSPDSTSTTQTSQNQ). 2 stretches are compositionally biased toward polar residues: residues 345-397 (SDKI…QDML) and 406-423 (EVSQ…QTIL). A compositionally biased stretch (basic and acidic residues) spans 426–440 (GHPEREHVGRGDKRG). A compositionally biased stretch (gly residues) spans 482–498 (AGRGHRGGGAYRGGGRG). Residues 501–513 (QRVEKEFRKEGVL) show a composition bias toward basic and acidic residues.

It belongs to the RNF25 family.

The protein localises to the cytoplasm. It catalyses the reaction S-ubiquitinyl-[E2 ubiquitin-conjugating enzyme]-L-cysteine + [acceptor protein]-L-lysine = [E2 ubiquitin-conjugating enzyme]-L-cysteine + N(6)-ubiquitinyl-[acceptor protein]-L-lysine.. The protein operates within protein modification; protein ubiquitination. Its function is as follows. E3 ubiquitin-protein ligase that plays a key role in the RNF14-RNF25 translation quality control pathway, a pathway that takes place when a ribosome has stalled during translation, and which promotes ubiquitination and degradation of translation factors on stalled ribosomes. May also acts as a positive regulator of the Wnt signaling. This Danio rerio (Zebrafish) protein is E3 ubiquitin-protein ligase RNF25.